Consider the following 511-residue polypeptide: Cytochrome P450 26B1 (511 aa).

Cysteine 440 is a heme binding site.

It belongs to the cytochrome P450 family. Requires heme as cofactor.

The protein resides in the endoplasmic reticulum membrane. It is found in the microsome membrane. The catalysed reaction is all-trans-retinoate + reduced [NADPH--hemoprotein reductase] + O2 = all-trans-4-hydroxyretinoate + oxidized [NADPH--hemoprotein reductase] + H2O + H(+). It carries out the reaction all-trans-retinoate + reduced [NADPH--hemoprotein reductase] + O2 = all-trans-18-hydroxyretinoate + oxidized [NADPH--hemoprotein reductase] + H2O + H(+). A cytochrome P450 monooxygenase involved in the metabolism of retinoates (RAs), the active metabolites of vitamin A, and critical signaling molecules in animals. RAs exist as at least four different isomers: all-trans-RA (atRA), 9-cis-RA, 13-cis-RA, and 9,13-dicis-RA, where atRA is considered to be the biologically active isomer, although 9-cis-RA and 13-cis-RA also have activity. Catalyzes the hydroxylation of atRA primarily at C-4 and C-18, thereby contributing to the regulation of atRA homeostasis and signaling. Hydroxylation of atRA limits its biological activity and initiates a degradative process leading to its eventual elimination. Involved in the convertion of atRA to all-trans-4-oxo-RA. Can oxidize all-trans-13,14-dihydroretinoate (DRA) to metabolites which could include all-trans-4-oxo-DRA, all-trans-4-hydroxy-DRA, all-trans-5,8-epoxy-DRA, and all-trans-18-hydroxy-DRA. Plays a role in skeletal development, both at the level of patterning and in the ossification of bone and the establishment of some synovial joints. This Danio rerio (Zebrafish) protein is Cytochrome P450 26B1.